A 322-amino-acid polypeptide reads, in one-letter code: ATP-dependent 6-phosphofructokinase 1 (322 aa).

Glycine 11 is an ATP binding site. 21 to 25 (RAVVR) is a binding site for ADP. Residues 72–73 (RS) and 102–105 (GDGT) each bind ATP. Aspartate 103 contributes to the Mg(2+) binding site. Residue 126 to 128 (TID) participates in substrate binding. Catalysis depends on aspartate 128, which acts as the Proton acceptor. Residue arginine 155 coordinates ADP. Residues arginine 163 and 170-172 (MGR) contribute to the substrate site. ADP is bound by residues 186 to 188 (GAE), arginine 212, and 214 to 216 (KKS). Residues glutamate 223, arginine 246, and 252-255 (HIQR) each bind substrate.

The protein belongs to the phosphofructokinase type A (PFKA) family. ATP-dependent PFK group I subfamily. Prokaryotic clade 'B1' sub-subfamily. As to quaternary structure, homotetramer. The cofactor is Mg(2+).

It localises to the cytoplasm. The enzyme catalyses beta-D-fructose 6-phosphate + ATP = beta-D-fructose 1,6-bisphosphate + ADP + H(+). Its pathway is carbohydrate degradation; glycolysis; D-glyceraldehyde 3-phosphate and glycerone phosphate from D-glucose: step 3/4. With respect to regulation, allosterically activated by ADP and other diphosphonucleosides. Allosterically inhibited by phosphoenolpyruvate which induces the dissociation of the active tetramer into an inactive two-subunit forms. Functionally, catalyzes the phosphorylation of D-fructose 6-phosphate to fructose 1,6-bisphosphate by ATP, the first committing step of glycolysis. The chain is ATP-dependent 6-phosphofructokinase 1 from Thermus thermophilus (strain ATCC 27634 / DSM 579 / HB8).